The primary structure comprises 997 residues: FHIP family protein CPIJ015043 (997 aa).

Disordered regions lie at residues 558–579 (DHRS…QQLQ) and 759–922 (NVVL…GGAA). The span at 569 to 579 (QQHLHQQQQLQ) shows a compositional bias: low complexity. Positions 763–780 (GGSGPGGPRLSNGGGGTG) are enriched in gly residues. Low complexity-rich tracts occupy residues 781-792 (SSITSSLSQTTP) and 830-889 (GSNS…MVGS). The segment covering 911–922 (IGSGTVGGGGAA) has biased composition (gly residues).

Belongs to the FHIP family.

This chain is FHIP family protein CPIJ015043, found in Culex quinquefasciatus (Southern house mosquito).